Reading from the N-terminus, the 318-residue chain is Magnetosome protein MamM (318 aa).

The interval 1 to 210 (MRKSGCTVCS…FMDAYRGLMD (210 aa)) is transmembrane domain (TMD). Transmembrane regions (helical) follow at residues 13–33 (IGWV…FVGL), 39–59 (AMLA…MVVI), 81–101 (FILS…LLVH), and 117–137 (LIVL…YFYS). A C-terminal domain (CTD) region spans residues 211 to 318 (HTAGEAVQNR…DEVMLSKVDN (108 aa)). Positions 249, 264, 285, and 289 each coordinate Fe cation.

Belongs to the cation diffusion facilitator (CDF) transporter (TC 2.A.4) family. As to quaternary structure, forms homodimers via its C-terminal domain (CTD) in the presence of metal cations. Interacts with MamB via their CTD.

The protein localises to the magnetosome membrane. The protein resides in the cell inner membrane. Functionally, probably plays a role in biomineralization. Required for stable accumulation of MamB. Probably binds and transports iron. May nucleate iron crystal formation. The chain is Magnetosome protein MamM (mamM) from Paramagnetospirillum magneticum (strain ATCC 700264 / AMB-1) (Magnetospirillum magneticum).